We begin with the raw amino-acid sequence, 378 residues long: Queuine tRNA-ribosyltransferase (378 aa).

Asp-89 acts as the Proton acceptor in catalysis. Residues 89 to 93, Asp-143, Gln-194, and Gly-221 contribute to the substrate site; that span reads DSGGF. The tract at residues 252–258 is RNA binding; it reads GVGTPAN. Asp-271 functions as the Nucleophile in the catalytic mechanism. Residues Cys-309, Cys-311, Cys-314, and His-340 each coordinate Zn(2+).

The protein belongs to the queuine tRNA-ribosyltransferase family. In terms of assembly, homodimer. Within each dimer, one monomer is responsible for RNA recognition and catalysis, while the other monomer binds to the replacement base PreQ1. Zn(2+) serves as cofactor.

The catalysed reaction is 7-aminomethyl-7-carbaguanine + guanosine(34) in tRNA = 7-aminomethyl-7-carbaguanosine(34) in tRNA + guanine. Its pathway is tRNA modification; tRNA-queuosine biosynthesis. Its function is as follows. Catalyzes the base-exchange of a guanine (G) residue with the queuine precursor 7-aminomethyl-7-deazaguanine (PreQ1) at position 34 (anticodon wobble position) in tRNAs with GU(N) anticodons (tRNA-Asp, -Asn, -His and -Tyr). Catalysis occurs through a double-displacement mechanism. The nucleophile active site attacks the C1' of nucleotide 34 to detach the guanine base from the RNA, forming a covalent enzyme-RNA intermediate. The proton acceptor active site deprotonates the incoming PreQ1, allowing a nucleophilic attack on the C1' of the ribose to form the product. After dissociation, two additional enzymatic reactions on the tRNA convert PreQ1 to queuine (Q), resulting in the hypermodified nucleoside queuosine (7-(((4,5-cis-dihydroxy-2-cyclopenten-1-yl)amino)methyl)-7-deazaguanosine). This chain is Queuine tRNA-ribosyltransferase, found in Lachnospira eligens (strain ATCC 27750 / DSM 3376 / VPI C15-48 / C15-B4) (Eubacterium eligens).